A 38-amino-acid chain; its full sequence is Antifungal protein 5 (38 aa).

The protein belongs to the plant LTP family.

Functionally, possesses potent antifungal activity against F.graminearum but not P.infestans. This Malva parviflora (Little mallow) protein is Antifungal protein 5.